The following is a 270-amino-acid chain: Transcriptional regulator BrlR (270 aa).

Residue Met1 participates in 3',3'-c-di-GMP binding. The HTH merR-type domain maps to 1–71 (MLTIGQLARI…LEAIDRLKRD (71 aa)). A DNA-binding region (H-T-H motif) is located at residues 4–23 (IGQLARIFEISTKTLRHYDA). Residues Arg31, Ser34, Asp35, Tyr40, Arg67, Arg70, Arg86, and Tyr270 each contribute to the 3',3'-c-di-GMP site. Positions 120 to 270 (MHARIVERPA…SQVDLYIPIY (151 aa)) are involved in effector-binding, probably including pyocyanine-binding.

Monomer. Homodimer; dimer formation enhanced in the presence of the second messenger, cyclic di-GMP (c-di-GMP). Homotetramer; dimer of dimers, arranged in a head-to-tail fashion, which may reduce DNA-binding ability. Conformational changes upon binding c-di-GMP or pyocyanine may facilitate DNA binding.

Transcriptional regulator. Responsive to the second messenger cyclic di-GMP (c-di-GMP) and to the virulence factor pyocyanine, which both enhance gene expression and promoter DNA binding of BrlR. Activates expression of operons encoding the multidrug efflux pumps MexAB-OprM and MexEF-OprN and several ABC transport systems, acting by direct binding to their respective promoters. Also acts as a repressor of the two component regulatory system, PhoPQ. Binds to promoter of its own gene. Contributes to the antimicrobial tolerance exhibited by biofilms, acting, at least in part, by activating expression of multidrug efflux pumps and ABC transporters. The polypeptide is Transcriptional regulator BrlR (Pseudomonas aeruginosa (strain ATCC 15692 / DSM 22644 / CIP 104116 / JCM 14847 / LMG 12228 / 1C / PRS 101 / PAO1)).